A 294-amino-acid chain; its full sequence is MKQTTIARRVETVGIGLHKGEPIRLILEPLDANSGIILHREDLGISFKAEPKNVINTQMATVVGNEKGFISTIEHLMAAVNGYGIDNIRISVDANEIPVMDGSAISFCMLLDEAGIRHLDAGKKVILVRREVEVIEGSKFVRTSPSRNPKFDYTIKFDHPVIGEQRYLFEFSKSSFVKNIARARTFGFLKDLQRLQAQNLALGASLDNAVAIDDTHILNPEGLRFENEFVRHKILDAVGDLSLLGAPLLGDYTAFAGSHDLNHKLTLALMADEKNYEIATLSGELLKEYQKVFA.

His-75, His-232, and Asp-236 together coordinate Zn(2+). His-259 acts as the Proton donor in catalysis.

This sequence belongs to the LpxC family. Requires Zn(2+) as cofactor.

It catalyses the reaction a UDP-3-O-[(3R)-3-hydroxyacyl]-N-acetyl-alpha-D-glucosamine + H2O = a UDP-3-O-[(3R)-3-hydroxyacyl]-alpha-D-glucosamine + acetate. The protein operates within glycolipid biosynthesis; lipid IV(A) biosynthesis; lipid IV(A) from (3R)-3-hydroxytetradecanoyl-[acyl-carrier-protein] and UDP-N-acetyl-alpha-D-glucosamine: step 2/6. In terms of biological role, catalyzes the hydrolysis of UDP-3-O-myristoyl-N-acetylglucosamine to form UDP-3-O-myristoylglucosamine and acetate, the committed step in lipid A biosynthesis. The sequence is that of UDP-3-O-acyl-N-acetylglucosamine deacetylase from Campylobacter concisus (strain 13826).